Consider the following 728-residue polypeptide: Catalase B (728 aa).

Active-site residues include His-107 and Asn-180. Tyr-394 lines the heme pocket.

It belongs to the catalase family. Requires heme as cofactor.

Its subcellular location is the secreted. It catalyses the reaction 2 H2O2 = O2 + 2 H2O. Functionally, occurs in almost all aerobically respiring organisms and serves to protect cells from the toxic effects of hydrogen peroxide. The protein is Catalase B (CATB) of Ajellomyces capsulatus (Darling's disease fungus).